We begin with the raw amino-acid sequence, 508 residues long: DEAD-box ATP-dependent RNA helicase 8 (508 aa).

Residues 1-123 (MDPRARYPPG…LKLPPQDTRY (123 aa)) are disordered. Low complexity predominate over residues 18–53 (NPNYYNRGPPLQQQHNHHQQQQTSAPHHQQYVQRQP). Basic residues predominate over residues 54 to 64 (QQHHHHNHHQQ). The Q motif motif lies at 134–162 (NEFEDYFLKRELLMGIYEKGFERPSPIQE). One can recognise a Helicase ATP-binding domain in the interval 165 to 335 (IPIALTGSDI…DKYLPKPYVI (171 aa)). Residue 178–185 (AKNGTGKT) coordinates ATP. Positions 283–286 (DEAD) match the DEAD box motif. The Helicase C-terminal domain occupies 345–505 (GITQFYAFVE…PIPPQIDQAI (161 aa)).

Belongs to the DEAD box helicase family. DDX6/DHH1 subfamily.

It is found in the cytoplasm. Its subcellular location is the P-body. It catalyses the reaction ATP + H2O = ADP + phosphate + H(+). In terms of biological role, ATP-dependent RNA helicase involved in mRNA turnover, and more specifically in mRNA decapping. In Oryza sativa subsp. japonica (Rice), this protein is DEAD-box ATP-dependent RNA helicase 8.